Consider the following 315-residue polypeptide: L-lactate dehydrogenase (315 aa).

Residues Val12, Asp33, and Tyr65 each contribute to the NAD(+) site. Substrate is bound by residues Gln82, Arg88, and Asn120 to Asp123. Residues Ile118–Asn120 and Ser143 each bind NAD(+). Asp148–Arg151 is a binding site for substrate. Arg153 and His168 together coordinate beta-D-fructose 1,6-bisphosphate. The Proton acceptor role is filled by His175. Tyr219 bears the Phosphotyrosine mark. Substrate is bound at residue Thr228.

It belongs to the LDH/MDH superfamily. LDH family. As to quaternary structure, homotetramer.

The protein localises to the cytoplasm. It catalyses the reaction (S)-lactate + NAD(+) = pyruvate + NADH + H(+). The protein operates within fermentation; pyruvate fermentation to lactate; (S)-lactate from pyruvate: step 1/1. Allosterically activated by fructose 1,6-bisphosphate (FBP). In terms of biological role, catalyzes the conversion of lactate to pyruvate. The protein is L-lactate dehydrogenase of Mycoplasmopsis pulmonis (strain UAB CTIP) (Mycoplasma pulmonis).